The primary structure comprises 70 residues: Small, acid-soluble spore protein 1 (70 aa).

This sequence belongs to the alpha/beta-type SASP family.

Functionally, SASP are bound to spore DNA. They are double-stranded DNA-binding proteins that cause DNA to change to an a-like conformation. They protect the DNA backbone from chemical and enzymatic cleavage and are thus involved in dormant spore's high resistance to UV light. The protein is Small, acid-soluble spore protein 1 of Bacillus subtilis.